Consider the following 101-residue polypeptide: Small ribosomal subunit protein bS18c (101 aa).

Belongs to the bacterial ribosomal protein bS18 family. In terms of assembly, part of the 30S ribosomal subunit.

It localises to the plastid. The protein localises to the chloroplast. In Gossypium hirsutum (Upland cotton), this protein is Small ribosomal subunit protein bS18c.